The chain runs to 635 residues: DNA mismatch repair protein MutL (635 aa).

The tract at residues 359 to 399 is disordered; sequence GTNKYAQPEAAKSSAAEQAVARERSSARERAAPAYKEDHPY. Over residues 364–377 the composition is skewed to low complexity; sequence AQPEAAKSSAAEQA. Residues 378–399 show a composition bias toward basic and acidic residues; that stretch reads VARERSSARERAAPAYKEDHPY.

It belongs to the DNA mismatch repair MutL/HexB family.

In terms of biological role, this protein is involved in the repair of mismatches in DNA. It is required for dam-dependent methyl-directed DNA mismatch repair. May act as a 'molecular matchmaker', a protein that promotes the formation of a stable complex between two or more DNA-binding proteins in an ATP-dependent manner without itself being part of a final effector complex. This chain is DNA mismatch repair protein MutL, found in Yersinia pestis bv. Antiqua (strain Antiqua).